The sequence spans 48 residues: M-oxotoxin-Ot1a (48 aa).

In terms of tissue distribution, expressed by the venom gland.

It is found in the secreted. The protein resides in the target cell membrane. Its function is as follows. Disrupts cell membranes, particularly those rich in phosphocholine, through formation of pores. Has antimicrobial activity against Gram-negative bacterium E.coli, Gram-positive bacteria B.subtilis and S.aureus, and hemolytic activity against sheep, pig and guinea pig erythrocytes. Has insecticidal activity against S.frugiperda ovarian cells by opening non-selective ion channels. Enhances the insecticidal activity of spider venom neurotoxic peptides. The chain is M-oxotoxin-Ot1a from Oxyopes takobius (Lynx spider).